A 311-amino-acid polypeptide reads, in one-letter code: DNA-directed RNA polymerase subunit alpha (311 aa).

The alpha N-terminal domain (alpha-NTD) stretch occupies residues 1 to 227 (MNNISIKCLK…DLFTLLINNK (227 aa)). The interval 242–311 (ISIEPYTNIA…LKNKLGIILK (70 aa)) is alpha C-terminal domain (alpha-CTD).

This sequence belongs to the RNA polymerase alpha chain family. As to quaternary structure, in plastids the minimal PEP RNA polymerase catalytic core is composed of four subunits: alpha, beta, beta', and beta''. When a (nuclear-encoded) sigma factor is associated with the core the holoenzyme is formed, which can initiate transcription.

It is found in the plastid. The protein resides in the chloroplast. The catalysed reaction is RNA(n) + a ribonucleoside 5'-triphosphate = RNA(n+1) + diphosphate. In terms of biological role, DNA-dependent RNA polymerase catalyzes the transcription of DNA into RNA using the four ribonucleoside triphosphates as substrates. The polypeptide is DNA-directed RNA polymerase subunit alpha (Phaeodactylum tricornutum (strain CCAP 1055/1)).